The following is a 200-amino-acid chain: Sec-independent protein translocase protein TatB (200 aa).

Residues 2–22 (LPDIGGTELLIIAAVALIVVG) form a helical membrane-spanning segment. The disordered stretch occupies residues 160–200 (KAPRKRASQKQEITVEAPKAVRAPRKRASKAGDSTASDIVS). Residues 191 to 200 (GDSTASDIVS) are compositionally biased toward polar residues.

It belongs to the TatB family. The Tat system comprises two distinct complexes: a TatABC complex, containing multiple copies of TatA, TatB and TatC subunits, and a separate TatA complex, containing only TatA subunits. Substrates initially bind to the TatABC complex, which probably triggers association of the separate TatA complex to form the active translocon.

Its subcellular location is the cell inner membrane. Part of the twin-arginine translocation (Tat) system that transports large folded proteins containing a characteristic twin-arginine motif in their signal peptide across membranes. Together with TatC, TatB is part of a receptor directly interacting with Tat signal peptides. TatB may form an oligomeric binding site that transiently accommodates folded Tat precursor proteins before their translocation. In Caulobacter vibrioides (strain ATCC 19089 / CIP 103742 / CB 15) (Caulobacter crescentus), this protein is Sec-independent protein translocase protein TatB.